Consider the following 83-residue polypeptide: Small ribosomal subunit protein bS18 (83 aa).

It belongs to the bacterial ribosomal protein bS18 family. Part of the 30S ribosomal subunit. Forms a tight heterodimer with protein bS6.

Binds as a heterodimer with protein bS6 to the central domain of the 16S rRNA, where it helps stabilize the platform of the 30S subunit. The protein is Small ribosomal subunit protein bS18 of Tropheryma whipplei (strain TW08/27) (Whipple's bacillus).